An 83-amino-acid polypeptide reads, in one-letter code: MSGNTGERSFADIITSIRYWVIHSITIPSLFIAGWLFVSTGLAYDVFGSPRPNEYFTDSRQEVPLITGRFDSLEQLDEFTRSF.

The helical transmembrane segment at 21–35 (VIHSITIPSLFIAGW) threads the bilayer. Heme is bound at residue H23.

It belongs to the PsbE/PsbF family. As to quaternary structure, heterodimer of an alpha subunit and a beta subunit. PSII is composed of 1 copy each of membrane proteins PsbA, PsbB, PsbC, PsbD, PsbE, PsbF, PsbH, PsbI, PsbJ, PsbK, PsbL, PsbM, PsbT, PsbX, PsbY, PsbZ, Psb30/Ycf12, at least 3 peripheral proteins of the oxygen-evolving complex and a large number of cofactors. It forms dimeric complexes. Requires heme b as cofactor.

It localises to the plastid. It is found in the chloroplast thylakoid membrane. Functionally, this b-type cytochrome is tightly associated with the reaction center of photosystem II (PSII). PSII is a light-driven water:plastoquinone oxidoreductase that uses light energy to abstract electrons from H(2)O, generating O(2) and a proton gradient subsequently used for ATP formation. It consists of a core antenna complex that captures photons, and an electron transfer chain that converts photonic excitation into a charge separation. In Ginkgo biloba (Ginkgo), this protein is Cytochrome b559 subunit alpha.